Here is a 249-residue protein sequence, read N- to C-terminus: Small ribosomal subunit protein eS6 (249 aa).

Over residues 223-238 (LRQRDHSKKHTQKVHA) the composition is skewed to basic residues. The interval 223 to 249 (LRQRDHSKKHTQKVHAQRAEVAAFQKK) is disordered.

The protein belongs to the eukaryotic ribosomal protein eS6 family. Component of the small ribosomal subunit. Part of the small subunit (SSU) processome, composed of more than 70 proteins and the RNA chaperone small nucleolar RNA (snoRNA) U3. In terms of processing, ribosomal protein S6 is the major substrate of protein kinases in eukaryote ribosomes.

The protein localises to the cytoplasm. The protein resides in the nucleus. Its subcellular location is the nucleolus. Functionally, component of the 40S small ribosomal subunit. Plays an important role in controlling cell growth and proliferation through the selective translation of particular classes of mRNA. Part of the small subunit (SSU) processome, first precursor of the small eukaryotic ribosomal subunit. During the assembly of the SSU processome in the nucleolus, many ribosome biogenesis factors, an RNA chaperone and ribosomal proteins associate with the nascent pre-rRNA and work in concert to generate RNA folding, modifications, rearrangements and cleavage as well as targeted degradation of pre-ribosomal RNA by the RNA exosome. The protein is Small ribosomal subunit protein eS6 (RPS6) of Leishmania infantum.